Consider the following 301-residue polypeptide: Homoserine O-acetyltransferase (301 aa).

The active-site Acyl-thioester intermediate is the Cys-142. The substrate site is built by Lys-163 and Ser-192. His-235 (proton acceptor) is an active-site residue. Glu-237 is an active-site residue. Arg-249 lines the substrate pocket.

This sequence belongs to the MetA family.

The protein localises to the cytoplasm. The enzyme catalyses L-homoserine + acetyl-CoA = O-acetyl-L-homoserine + CoA. Its pathway is amino-acid biosynthesis; L-methionine biosynthesis via de novo pathway; O-acetyl-L-homoserine from L-homoserine: step 1/1. Functionally, transfers an acetyl group from acetyl-CoA to L-homoserine, forming acetyl-L-homoserine. This chain is Homoserine O-acetyltransferase, found in Lachnoclostridium phytofermentans (strain ATCC 700394 / DSM 18823 / ISDg) (Clostridium phytofermentans).